A 188-amino-acid chain; its full sequence is Ribosome maturation factor RimM (188 aa).

In terms of domain architecture, PRC barrel spans 93–166; it reads EDEYYDHQLI…RAVIDPPPGL (74 aa).

Belongs to the RimM family. Binds ribosomal protein uS19.

The protein localises to the cytoplasm. Functionally, an accessory protein needed during the final step in the assembly of 30S ribosomal subunit, possibly for assembly of the head region. Essential for efficient processing of 16S rRNA. May be needed both before and after RbfA during the maturation of 16S rRNA. It has affinity for free ribosomal 30S subunits but not for 70S ribosomes. The protein is Ribosome maturation factor RimM of Streptomyces coelicolor (strain ATCC BAA-471 / A3(2) / M145).